The sequence spans 358 residues: Phosphoserine aminotransferase (358 aa).

L-glutamate is bound at residue Arg-41. Pyridoxal 5'-phosphate-binding positions include Ala-75–Ser-76, Trp-100, Thr-148, Asp-167, and Gln-190. Lys-191 carries the N6-(pyridoxal phosphate)lysine modification. Asn-233–Thr-234 contributes to the pyridoxal 5'-phosphate binding site.

It belongs to the class-V pyridoxal-phosphate-dependent aminotransferase family. SerC subfamily. As to quaternary structure, homodimer. The cofactor is pyridoxal 5'-phosphate.

Its subcellular location is the cytoplasm. It catalyses the reaction O-phospho-L-serine + 2-oxoglutarate = 3-phosphooxypyruvate + L-glutamate. The catalysed reaction is 4-(phosphooxy)-L-threonine + 2-oxoglutarate = (R)-3-hydroxy-2-oxo-4-phosphooxybutanoate + L-glutamate. Its pathway is amino-acid biosynthesis; L-serine biosynthesis; L-serine from 3-phospho-D-glycerate: step 2/3. It functions in the pathway cofactor biosynthesis; pyridoxine 5'-phosphate biosynthesis; pyridoxine 5'-phosphate from D-erythrose 4-phosphate: step 3/5. In terms of biological role, catalyzes the reversible conversion of 3-phosphohydroxypyruvate to phosphoserine and of 3-hydroxy-2-oxo-4-phosphonooxybutanoate to phosphohydroxythreonine. The chain is Phosphoserine aminotransferase from Campylobacter jejuni subsp. jejuni serotype O:23/36 (strain 81-176).